A 443-amino-acid polypeptide reads, in one-letter code: Probable nitrate/nitrite antiporter NarK1 (443 aa).

A run of 12 helical transmembrane segments spans residues 23 to 43 (TLAFTLMFAAWLMFGVLGVPI), 56 to 76 (WISALAILNGSLWRLLAGILA), 79 to 99 (YGGRLVFTLMLFFTAIPAYLV), 108 to 128 (LLLYAFLVGFAGNSFSVGIAW), 142 to 164 (LGVFGAGNVGASVTKFIGPALIA), 182 to 202 (FIPFLYAVLLVLMGFVLWFGT), 230 to 250 (FSLYYVVVFGAYVALSAWLPK), 255 to 275 (VFGLPLHEAALLTALFIFPAS), 298 to 318 (FGIILLASGVLMMPEGHIVLY), 329 to 349 (FTMGVELFTLLVFLIGVGMGI), 368 to 388 (AVGGLVGMLGALGGFFLPPLF), and 401 to 421 (TFFVLFLLAAISFLWMHLTVL).

It belongs to the major facilitator superfamily. Nitrate/nitrite porter (TC 2.A.1.8) family.

The protein resides in the cell membrane. The catalysed reaction is nitrate(in) + nitrite(out) = nitrate(out) + nitrite(in). Its function is as follows. Probable nitrate/nitrite antiporter that may be involved in nitrate import and nitrite export during anaerobic growth. The protein is Probable nitrate/nitrite antiporter NarK1 of Thermus thermophilus.